We begin with the raw amino-acid sequence, 223 residues long: Endonuclease NucS (223 aa).

This sequence belongs to the NucS endonuclease family.

It localises to the cytoplasm. Functionally, cleaves both 3' and 5' ssDNA extremities of branched DNA structures. The protein is Endonuclease NucS of Mycolicibacterium vanbaalenii (strain DSM 7251 / JCM 13017 / BCRC 16820 / KCTC 9966 / NRRL B-24157 / PYR-1) (Mycobacterium vanbaalenii).